The sequence spans 506 residues: Anaerobic nitric oxide reductase transcription regulator NorR (506 aa).

4-aspartylphosphate is present on Asp-57. The Sigma-54 factor interaction domain occupies 187 to 416 (MIGLSPNMMQ…LEHAIHRAVV (230 aa)). ATP contacts are provided by residues 215 to 222 (GETGTGKE) and 278 to 287 (ADNGTLFLDE). The segment at residues 481 to 500 (WAACARALETDVANLHRLAK) is a DNA-binding region (H-T-H motif).

It participates in nitrogen metabolism; nitric oxide reduction. Required for the expression of anaerobic nitric oxide (NO) reductase, acts as a transcriptional activator for at least the norVW operon. Activation also requires sigma-54. The sequence is that of Anaerobic nitric oxide reductase transcription regulator NorR from Citrobacter koseri (strain ATCC BAA-895 / CDC 4225-83 / SGSC4696).